A 123-amino-acid chain; its full sequence is Ig heavy chain V region H8 (123 aa).

The region spanning 1–114 (EVKLVESGGG…BSYWYFDVWG (114 aa)) is the Ig-like domain.

The protein is Ig heavy chain V region H8 of Mus musculus (Mouse).